Consider the following 182-residue polypeptide: Nascent polypeptide-associated complex subunit alpha (182 aa).

Residues 17–81 (NKNEKKAKEL…AKVDDMNQRI (65 aa)) enclose the NAC-A/B domain. The interval 120–148 (ASLQGGESNADAAEDDNEEVDETGINPKD) is disordered. Positions 131 to 141 (AAEDDNEEVDE) are enriched in acidic residues. Residues 144 to 182 (INPKDIDLIVEQTRVSRGSAVKALKKHDGDMVNALMELS) enclose the UBA domain.

It belongs to the NAC-alpha family. Part of the nascent polypeptide-associated complex (NAC), consisting of EGD2 and EGD1. NAC associates with ribosomes via EGD1.

Its subcellular location is the cytoplasm. The protein resides in the nucleus. Functionally, component of the nascent polypeptide-associated complex (NAC), a dynamic component of the ribosomal exit tunnel, protecting the emerging polypeptides from interaction with other cytoplasmic proteins to ensure appropriate nascent protein targeting. The NAC complex also promotes mitochondrial protein import by enhancing productive ribosome interactions with the outer mitochondrial membrane and blocks the inappropriate interaction of ribosomes translating non-secretory nascent polypeptides with translocation sites in the membrane of the endoplasmic reticulum. EGD2 may also be involved in transcription regulation. The sequence is that of Nascent polypeptide-associated complex subunit alpha (EGD2) from Lodderomyces elongisporus (strain ATCC 11503 / CBS 2605 / JCM 1781 / NBRC 1676 / NRRL YB-4239) (Yeast).